Reading from the N-terminus, the 215-residue chain is Imidazole glycerol phosphate synthase subunit HisH (215 aa).

Residues 8 to 215 (KVVVFDYGFG…QLLNNWIGTL (208 aa)) form the Glutamine amidotransferase type-1 domain. Catalysis depends on cysteine 86, which acts as the Nucleophile. Catalysis depends on residues histidine 196 and glutamate 198.

As to quaternary structure, heterodimer of HisH and HisF.

It is found in the cytoplasm. The catalysed reaction is 5-[(5-phospho-1-deoxy-D-ribulos-1-ylimino)methylamino]-1-(5-phospho-beta-D-ribosyl)imidazole-4-carboxamide + L-glutamine = D-erythro-1-(imidazol-4-yl)glycerol 3-phosphate + 5-amino-1-(5-phospho-beta-D-ribosyl)imidazole-4-carboxamide + L-glutamate + H(+). The enzyme catalyses L-glutamine + H2O = L-glutamate + NH4(+). It participates in amino-acid biosynthesis; L-histidine biosynthesis; L-histidine from 5-phospho-alpha-D-ribose 1-diphosphate: step 5/9. IGPS catalyzes the conversion of PRFAR and glutamine to IGP, AICAR and glutamate. The HisH subunit catalyzes the hydrolysis of glutamine to glutamate and ammonia as part of the synthesis of IGP and AICAR. The resulting ammonia molecule is channeled to the active site of HisF. This is Imidazole glycerol phosphate synthase subunit HisH from Streptomyces avermitilis (strain ATCC 31267 / DSM 46492 / JCM 5070 / NBRC 14893 / NCIMB 12804 / NRRL 8165 / MA-4680).